The sequence spans 32 residues: uncharacterized protein (32 aa).

This is an uncharacterized protein from Gallus gallus (Chicken).